Consider the following 183-residue polypeptide: Ribulose bisphosphate carboxylase small subunit, chloroplastic (183 aa).

The N-terminal 59 residues, 1 to 59 (MASSMISSGTVATVSADRPAPAQARMVAPFTGLKSSSASPVTRKSNDITSIASNGGRVQ), are a transit peptide targeting the chloroplast.

It belongs to the RuBisCO small chain family. Heterohexadecamer of 8 large and 8 small subunits.

It is found in the plastid. The protein resides in the chloroplast. In terms of biological role, ruBisCO catalyzes two reactions: the carboxylation of D-ribulose 1,5-bisphosphate, the primary event in carbon dioxide fixation, as well as the oxidative fragmentation of the pentose substrate. Both reactions occur simultaneously and in competition at the same active site. Although the small subunit is not catalytic it is essential for maximal activity. The sequence is that of Ribulose bisphosphate carboxylase small subunit, chloroplastic from Malus sp. (Crab apple).